The chain runs to 342 residues: Uroporphyrinogen decarboxylase (342 aa).

Substrate contacts are provided by residues 24 to 28 (RQAGR), D74, Y149, S204, and H319.

It belongs to the uroporphyrinogen decarboxylase family. As to quaternary structure, homodimer.

The protein resides in the cytoplasm. The enzyme catalyses uroporphyrinogen III + 4 H(+) = coproporphyrinogen III + 4 CO2. It participates in porphyrin-containing compound metabolism; protoporphyrin-IX biosynthesis; coproporphyrinogen-III from 5-aminolevulinate: step 4/4. Functionally, catalyzes the decarboxylation of four acetate groups of uroporphyrinogen-III to yield coproporphyrinogen-III. This is Uroporphyrinogen decarboxylase from Chelativorans sp. (strain BNC1).